A 406-amino-acid chain; its full sequence is Tryptophan 2,3-dioxygenase (406 aa).

S19 is subject to Phosphoserine. Substrate contacts are provided by residues F72–H76 and R144. Residue H328 participates in heme binding. T342 contacts substrate.

The protein belongs to the tryptophan 2,3-dioxygenase family. Homotetramer. Dimer of dimers. It depends on heme as a cofactor. In terms of tissue distribution, liver.

It carries out the reaction L-tryptophan + O2 = N-formyl-L-kynurenine. It participates in amino-acid degradation; L-tryptophan degradation via kynurenine pathway; L-kynurenine from L-tryptophan: step 1/2. In terms of biological role, heme-dependent dioxygenase that catalyzes the oxidative cleavage of the L-tryptophan (L-Trp) pyrrole ring and converts L-tryptophan to N-formyl-L-kynurenine. Catalyzes the oxidative cleavage of the indole moiety. The sequence is that of Tryptophan 2,3-dioxygenase from Rattus norvegicus (Rat).